Consider the following 678-residue polypeptide: DNA gyrase subunit B (678 aa).

The 115-residue stretch at 456–570 folds into the Toprim domain; it reads SELYVVEGDS…HGYVFLAQPP (115 aa). Mg(2+) is bound by residues Glu462, Asp535, and Asp537.

This sequence belongs to the type II topoisomerase GyrB family. Heterotetramer, composed of two GyrA and two GyrB chains. In the heterotetramer, GyrA contains the active site tyrosine that forms a transient covalent intermediate with the DNA, while GyrB binds cofactors catalyzes ATP hydrolysis. The cofactor is Mg(2+). Requires Mn(2+) as cofactor. Ca(2+) is required as a cofactor.

It localises to the cytoplasm. It carries out the reaction ATP-dependent breakage, passage and rejoining of double-stranded DNA.. Its activity is regulated as follows. DNA supercoiling is inhibited by fluoroquinolones; IC(50) 1 ug/ml for sitafloxacin. Its function is as follows. A type II topoisomerase that negatively supercoils closed circular double-stranded (ds) DNA in an ATP-dependent manner to modulate DNA topology and maintain chromosomes in an underwound state. Negative supercoiling favors strand separation, and DNA replication, transcription, recombination and repair, all of which involve strand separation. Also able to catalyze the interconversion of other topological isomers of dsDNA rings, including catenanes and knotted rings. Type II topoisomerases break and join 2 DNA strands simultaneously in an ATP-dependent manner. The sequence is that of DNA gyrase subunit B from Mycobacterium leprae (strain TN).